A 363-amino-acid polypeptide reads, in one-letter code: Pyruvate dehydrogenase E1 component subunit beta-1, mitochondrial (363 aa).

The transit peptide at 1–29 (MLGILRQRAIDGASTLRRTRFALVSARSY) directs the protein to the mitochondrion. Position 92 (E92) interacts with thiamine diphosphate. Residues I145, A193, I194, and D196 each coordinate K(+). Residues K247 and K254 each participate in a glycyl lysine isopeptide (Lys-Gly) (interchain with G-Cter in ubiquitin) cross-link.

Tetramer of 2 alpha and 2 beta subunits. Thiamine diphosphate serves as cofactor. Expressed in roots, immature rosettes, and mature rosettes.

The protein resides in the mitochondrion matrix. It catalyses the reaction N(6)-[(R)-lipoyl]-L-lysyl-[protein] + pyruvate + H(+) = N(6)-[(R)-S(8)-acetyldihydrolipoyl]-L-lysyl-[protein] + CO2. Its function is as follows. The pyruvate dehydrogenase complex catalyzes the overall conversion of pyruvate to acetyl-CoA and CO(2). It contains multiple copies of three enzymatic components: pyruvate dehydrogenase (E1), dihydrolipoamide acetyltransferase (E2) and lipoamide dehydrogenase (E3). The polypeptide is Pyruvate dehydrogenase E1 component subunit beta-1, mitochondrial (PDH2) (Arabidopsis thaliana (Mouse-ear cress)).